The following is a 278-amino-acid chain: Octanoyltransferase LipM (278 aa).

Residues Lys-33–Leu-248 enclose the BPL/LPL catalytic domain. Cys-150 acts as the Acyl-thioester intermediate in catalysis.

Belongs to the octanoyltransferase LipM family. As to quaternary structure, monomer.

It carries out the reaction octanoyl-[ACP] + L-lysyl-[protein] = N(6)-octanoyl-L-lysyl-[protein] + holo-[ACP] + H(+). It functions in the pathway protein modification; protein lipoylation via endogenous pathway; protein N(6)-(lipoyl)lysine from octanoyl-[acyl-carrier-protein]. In terms of biological role, catalyzes the transfer of endogenously produced octanoic acid from octanoyl-acyl-carrier-protein onto the lipoyl domain of GcvH, an intermediate carrier during protein lipoylation. In Bacillus cereus (strain ATCC 14579 / DSM 31 / CCUG 7414 / JCM 2152 / NBRC 15305 / NCIMB 9373 / NCTC 2599 / NRRL B-3711), this protein is Octanoyltransferase LipM.